A 273-amino-acid polypeptide reads, in one-letter code: 4-hydroxy-tetrahydrodipicolinate reductase (273 aa).

Residues 12 to 17 (GAGGRM) and E38 contribute to the NAD(+) site. An NADP(+)-binding site is contributed by R39. NAD(+) is bound by residues 102-104 (GTT) and 126-129 (AANF). The Proton donor/acceptor role is filled by H159. (S)-2,3,4,5-tetrahydrodipicolinate is bound at residue H160. The active-site Proton donor is K163. 169–170 (GT) lines the (S)-2,3,4,5-tetrahydrodipicolinate pocket.

This sequence belongs to the DapB family. Homotetramer.

It is found in the cytoplasm. The enzyme catalyses (S)-2,3,4,5-tetrahydrodipicolinate + NAD(+) + H2O = (2S,4S)-4-hydroxy-2,3,4,5-tetrahydrodipicolinate + NADH + H(+). It catalyses the reaction (S)-2,3,4,5-tetrahydrodipicolinate + NADP(+) + H2O = (2S,4S)-4-hydroxy-2,3,4,5-tetrahydrodipicolinate + NADPH + H(+). Its pathway is amino-acid biosynthesis; L-lysine biosynthesis via DAP pathway; (S)-tetrahydrodipicolinate from L-aspartate: step 4/4. In terms of biological role, catalyzes the conversion of 4-hydroxy-tetrahydrodipicolinate (HTPA) to tetrahydrodipicolinate. The chain is 4-hydroxy-tetrahydrodipicolinate reductase from Pectobacterium carotovorum subsp. carotovorum (strain PC1).